A 217-amino-acid polypeptide reads, in one-letter code: tRNA (guanine-N(7)-)-methyltransferase (217 aa).

Glu45, Glu70, Asp97, and Asp119 together coordinate S-adenosyl-L-methionine. Residue Asp119 is part of the active site. Lys123 serves as a coordination point for substrate. Positions 125 to 130 are interaction with RNA; the sequence is RHEKRR. Substrate is bound by residues Asp155 and 195 to 198; that span reads TEYE.

The protein belongs to the class I-like SAM-binding methyltransferase superfamily. TrmB family.

The enzyme catalyses guanosine(46) in tRNA + S-adenosyl-L-methionine = N(7)-methylguanosine(46) in tRNA + S-adenosyl-L-homocysteine. The protein operates within tRNA modification; N(7)-methylguanine-tRNA biosynthesis. Functionally, catalyzes the formation of N(7)-methylguanine at position 46 (m7G46) in tRNA. This chain is tRNA (guanine-N(7)-)-methyltransferase, found in Lactobacillus helveticus (strain DPC 4571).